Consider the following 212-residue polypeptide: Ropporin-1A (212 aa).

The region spanning 12–49 (PELPKMLKEFAKAAIRVQPQDLIQWAADYFEALSRGET) is the RIIa domain. The residue at position 56 (Ser56) is a Phosphoserine. The tract at residues 209 to 212 (VQLE) is interaction with RHPN1.

The protein belongs to the ropporin family. Homodimer. Interacts with AKAP3 and RHPN1. May interact with SPA17. Interacts with FSCB; the interaction increases upon spermatozoa capacitation conditions. Interacts with CFAP61. Post-translationally, sumoylated, sumoylation decreases upon spermatozoa capacitation conditions. Testis specific in adult. Overexpressed in hematologic tumor cells.

Its subcellular location is the cell projection. The protein localises to the cilium. It is found in the flagellum. In terms of biological role, important for male fertility. With ROPN1L, involved in fibrous sheath integrity and sperm motility, plays a role in PKA-dependent signaling processes required for spermatozoa capacitation. The sequence is that of Ropporin-1A (ROPN1) from Homo sapiens (Human).